Reading from the N-terminus, the 305-residue chain is Glycine--tRNA ligase alpha subunit (305 aa).

Belongs to the class-II aminoacyl-tRNA synthetase family. In terms of assembly, tetramer of two alpha and two beta subunits.

It is found in the cytoplasm. It catalyses the reaction tRNA(Gly) + glycine + ATP = glycyl-tRNA(Gly) + AMP + diphosphate. In Streptococcus pyogenes serotype M49 (strain NZ131), this protein is Glycine--tRNA ligase alpha subunit.